Consider the following 31-residue polypeptide: MERSTQELFINFTVVLITVLLMWLLVRSYQY.

The Cytoplasmic portion of the chain corresponds to 1 to 7 (MERSTQE). The helical transmembrane segment at 8-26 (LFINFTVVLITVLLMWLLV) threads the bilayer. Over 27–31 (RSYQY) the chain is Lumenal.

Belongs to the sarcolipin family. Homooligomer. Can also form heterooligomers with other sarcoplasmic/endoplasmic reticulum calcium ATPase (SERCA) regulators ARLN, ERLN, PLN and STRIT1/DWORF. Monomer. Interacts with calcium ATPase ATP2A1/SERCA1. Interacts as a monomer with ATP2A2/SERCA2; the interaction decreases ATP2A2 Ca(2+) affinity. Interacts with VMP1; VMP1 competes with PLN and SLN to prevent them from forming an inhibitory complex with ATP2A2.

The protein resides in the sarcoplasmic reticulum membrane. It localises to the endoplasmic reticulum membrane. Reversibly inhibits the activity of ATP2A1/SERCA1 and ATP2A2/SERCA2 in sarcoplasmic reticulum by decreasing the apparent affinity of the ATPase for Ca(2+). Also inhibits the activity of ATP2A3/SERCA3. Modulates calcium re-uptake during muscle relaxation and plays an important role in calcium homeostasis in muscle. Required for muscle-based, non-shivering thermogenesis. The chain is Sarcolipin (Sln) from Rattus norvegicus (Rat).